We begin with the raw amino-acid sequence, 318 residues long: NAD(P)H-dependent D-xylose reductase (318 aa).

The Proton donor role is filled by tyrosine 48. Histidine 110 provides a ligand contact to substrate. NAD(+) is bound by residues 165-166 (SN), 214-223 (SNFGPLSFLE), and 270-280 (KSTFPNTLAVN).

Belongs to the aldo/keto reductase family.

It carries out the reaction xylitol + NAD(+) = D-xylose + NADH + H(+). It catalyses the reaction xylitol + NADP(+) = D-xylose + NADPH + H(+). It participates in carbohydrate metabolism; D-xylose degradation. Its function is as follows. Reduces D-xylose into xylitol. Has a preference for NADPH, but can also utilize NADH as cosubstrate. The protein is NAD(P)H-dependent D-xylose reductase (XYL1) of Pachysolen tannophilus (Yeast).